The following is a 485-amino-acid chain: Sodium-coupled neutral amino acid symporter 1 (485 aa).

Residues 1–74 are Cytoplasmic-facing; it reads MMHFKSGLEL…EYIPGTTSLG (74 aa). A Phosphoserine modification is found at S6. A Phosphothreonine modification is found at T11. Phosphoserine occurs at positions 25, 28, 49, and 52. T54 bears the Phosphothreonine mark. Position 56 is a phosphoserine (S56). The chain crosses the membrane as a helical span at residues 75-97; it reads MSVFNLSNAIMGSGILGLAFALA. Topologically, residues 98-112 are extracellular; sequence NTGILLFLILLTSVT. A helical membrane pass occupies residues 113–133; the sequence is LLSIYSINLLLICSKETGCMV. Residues 134-148 are Cytoplasmic-facing; that stretch reads YEKLGEQVFGTTGKL. A helical membrane pass occupies residues 149–169; that stretch reads VIFGATSLQNTGAMLSYLFIV. At 170–188 the chain is on the extracellular side; the sequence is KNELPSAIKSLMGEEDAFS. The chain crosses the membrane as a helical span at residues 189-211; that stretch reads AWYVDGRVLVVMVTFGIILPLCL. Residues 212–216 lie on the Cytoplasmic side of the membrane; it reads LKNLG. Residues 217–237 traverse the membrane as a helical segment; it reads YLGYTSGFSLSCMMFFLIVVI. Residues 238–273 are Extracellular-facing; that stretch reads YKKFQTPCMSVEQNSTVSANVTDACTPKYVTFNSKT. A disulfide bridge links C245 with C262. N-linked (GlcNAc...) asparagine glycosylation is found at N251 and N257. A helical transmembrane segment spans residues 274–294; sequence VYALPTIAFAFVCHPSVLPIY. Topologically, residues 295-310 are cytoplasmic; the sequence is SELKDRSQKKMQMVSN. The chain crosses the membrane as a helical span at residues 311–331; the sequence is ISFFAMFVMYFLTAIFGYLTF. The Extracellular segment spans residues 332–348; it reads YEKVQSDLLHKYQSTGD. The chain crosses the membrane as a helical span at residues 349–369; it reads ILILTVRLAVIVAVILTVPVL. The Cytoplasmic portion of the chain corresponds to 370–391; that stretch reads FFTVRSSLFELAKKTKFHLCRH. A helical membrane pass occupies residues 392 to 412; sequence VLVTIILLIIINLLVIFIPSM. The Extracellular segment spans residues 413–414; that stretch reads KD. A helical membrane pass occupies residues 415-435; the sequence is IFGVVGVTSANMLIFILPSSL. The Cytoplasmic portion of the chain corresponds to 436–450; sequence YLKITNQDGDKGTQR. Residues 451–471 form a helical membrane-spanning segment; that stretch reads IWAALFLGLGVLFSLISIPLV. Residues 472 to 485 are Extracellular-facing; sequence IYDWACSSGTDEGH.

The protein belongs to the amino acid/polyamine transporter 2 family. Post-translationally, N-glycosylation plays an important role in the L-glutamine transport. In terms of tissue distribution, specifically expressed in brain and retina (at protein level). Also detected in spleen, small intestine and lung.

Its subcellular location is the cell membrane. The enzyme catalyses L-glutamine(in) + Na(+)(in) = L-glutamine(out) + Na(+)(out). It catalyses the reaction L-alanine(in) + Na(+)(in) = L-alanine(out) + Na(+)(out). The catalysed reaction is L-histidine(in) + Na(+)(in) = L-histidine(out) + Na(+)(out). It carries out the reaction L-asparagine(in) + Na(+)(in) = L-asparagine(out) + Na(+)(out). The enzyme catalyses L-serine(in) + Na(+)(in) = L-serine(out) + Na(+)(out). It catalyses the reaction L-cysteine(in) + Na(+)(in) = L-cysteine(out) + Na(+)(out). The catalysed reaction is L-methionine(in) + Na(+)(in) = L-methionine(out) + Na(+)(out). It carries out the reaction glycine(in) + Na(+)(in) = glycine(out) + Na(+)(out). The enzyme catalyses L-threonine(in) + Na(+)(in) = L-threonine(out) + Na(+)(out). It catalyses the reaction L-proline(in) + Na(+)(in) = L-proline(out) + Na(+)(out). With respect to regulation, inhibited by alpha-(methylamino)isobutyric acid (MeAIB). Inhibited by lithium, potassium, choline ions, N-methylglucamine. The pH dependence has an allosteric effect on the transport. Symporter that cotransports short-chain neutral amino acids and sodium ions from the extraccellular to the intracellular side of the cell membrane. The transport is elctrogenic, pH dependent and driven by the Na(+) electrochemical gradient. Participates in the astroglia-derived glutamine transport into GABAergic interneurons for neurotransmitter GABA de novo synthesis. May also contributes to amino acid transport in placental trophoblast. Regulates synaptic plasticity. This is Sodium-coupled neutral amino acid symporter 1 from Mus musculus (Mouse).